We begin with the raw amino-acid sequence, 207 residues long: Protein phosphatase inhibitor 2 (207 aa).

Disordered regions lie at residues 1–44, 65–97, and 110–146; these read MAAS…SKKS, LMKI…ALTP, and ESLE…EMKR. N-acetylalanine is present on A2. The segment at 12 to 17 is required for binding PPP1CC; it reads KGILKN. Over residues 19–28 the composition is skewed to low complexity; sequence SSTTSSVVST. The span at 35–44 shows a compositional bias: basic and acidic residues; sequence SVDEELSKKS. The required for binding PPP1CC stretch occupies residues 43 to 55; that stretch reads KSQKWDEMSILAT. A Phosphoserine; by ATM modification is found at S44. T73 bears the Phosphothreonine; by GSK3 mark. Residues 80–91 show a composition bias toward acidic residues; sequence ADDEDALSDSET. Phosphoserine is present on residues S87 and S89. Phosphothreonine is present on residues T92 and T96. The span at 112 to 122 shows a compositional bias: basic and acidic residues; it reads LEPKYRVREQE. Phosphoserine is present on residues S123, S124, S129, and S132. Positions 123–132 are enriched in acidic residues; it reads SSGDEDSDLS. The segment covering 133–145 has biased composition (basic and acidic residues); it reads PEEREKKRQFEMK. The interval 149–152 is required for binding PPP1CC catalytic center, displacing metal ions and inhibition of PPP1CC catalytic activity; it reads HYNE. The segment at 165–207 is disordered; that stretch reads KDLNDEEEDEEMSETAAGESMNMEESSQGSATSDQLQNKSQSS. Over residues 168 to 177 the composition is skewed to acidic residues; that stretch reads NDEEEDEEMS. Polar residues predominate over residues 187–207; the sequence is MEESSQGSATSDQLQNKSQSS.

This sequence belongs to the protein phosphatase inhibitor 2 family. Heterodimer with PP1. Phosphorylation on Ser-44 by ATM activates PP1 by dissociating the PP1-PPP1R2 complex. Phosphorylation on Thr-73 by GSK3 activates PP1 by dissociating the PP1-PPP1R2 complex.

Its function is as follows. Inhibitor of protein-phosphatase 1. In Bos taurus (Bovine), this protein is Protein phosphatase inhibitor 2 (PPP1R2).